Consider the following 292-residue polypeptide: BTB/POZ domain-containing protein KCTD7 (292 aa).

The interval 1–27 (MVVFSAASDSEKPGDAMSGADKGEEEY) is disordered. In terms of domain architecture, BTB spans 56–144 (IPLNVGGTYF…YAIGPLLENL (89 aa)).

Its subcellular location is the cell membrane. The protein resides in the cytoplasm. It localises to the cytosol. The polypeptide is BTB/POZ domain-containing protein KCTD7 (kctd7) (Danio rerio (Zebrafish)).